We begin with the raw amino-acid sequence, 332 residues long: Glycerol-3-phosphate dehydrogenase [NAD(P)+] (332 aa).

S11, F12, R32, and K106 together coordinate NADPH. K106, G134, and S136 together coordinate sn-glycerol 3-phosphate. A138 lines the NADPH pocket. K189, D242, S252, R253, and N254 together coordinate sn-glycerol 3-phosphate. Residue K189 is the Proton acceptor of the active site. R253 provides a ligand contact to NADPH. Residues V277 and E279 each contribute to the NADPH site.

This sequence belongs to the NAD-dependent glycerol-3-phosphate dehydrogenase family.

The protein localises to the cytoplasm. The enzyme catalyses sn-glycerol 3-phosphate + NAD(+) = dihydroxyacetone phosphate + NADH + H(+). It catalyses the reaction sn-glycerol 3-phosphate + NADP(+) = dihydroxyacetone phosphate + NADPH + H(+). It participates in membrane lipid metabolism; glycerophospholipid metabolism. Functionally, catalyzes the reduction of the glycolytic intermediate dihydroxyacetone phosphate (DHAP) to sn-glycerol 3-phosphate (G3P), the key precursor for phospholipid synthesis. The protein is Glycerol-3-phosphate dehydrogenase [NAD(P)+] of Clostridium acetobutylicum (strain ATCC 824 / DSM 792 / JCM 1419 / IAM 19013 / LMG 5710 / NBRC 13948 / NRRL B-527 / VKM B-1787 / 2291 / W).